The sequence spans 166 residues: Cyclic pyranopterin monophosphate synthase (166 aa).

Substrate-binding positions include 83–85 and 121–122; these read LCH and ME. Residue aspartate 136 is part of the active site.

Belongs to the MoaC family. As to quaternary structure, homohexamer; trimer of dimers.

The enzyme catalyses (8S)-3',8-cyclo-7,8-dihydroguanosine 5'-triphosphate = cyclic pyranopterin phosphate + diphosphate. It functions in the pathway cofactor biosynthesis; molybdopterin biosynthesis. In terms of biological role, catalyzes the conversion of (8S)-3',8-cyclo-7,8-dihydroguanosine 5'-triphosphate to cyclic pyranopterin monophosphate (cPMP). The protein is Cyclic pyranopterin monophosphate synthase of Trichodesmium erythraeum (strain IMS101).